Consider the following 854-residue polypeptide: Valine--tRNA ligase (854 aa).

The 'HIGH' region motif lies at P46–H56. The 'KMSKS' region signature appears at K551–S555. K554 provides a ligand contact to ATP.

This sequence belongs to the class-I aminoacyl-tRNA synthetase family. ValS type 2 subfamily. As to quaternary structure, monomer.

It localises to the cytoplasm. It carries out the reaction tRNA(Val) + L-valine + ATP = L-valyl-tRNA(Val) + AMP + diphosphate. Catalyzes the attachment of valine to tRNA(Val). As ValRS can inadvertently accommodate and process structurally similar amino acids such as threonine, to avoid such errors, it has a 'posttransfer' editing activity that hydrolyzes mischarged Thr-tRNA(Val) in a tRNA-dependent manner. This Orientia tsutsugamushi (strain Boryong) (Rickettsia tsutsugamushi) protein is Valine--tRNA ligase.